A 195-amino-acid chain; its full sequence is Toxin protein Tse4 (195 aa).

A run of 4 helical transmembrane segments spans residues 20–40 (ASGGGMTVAFLAGSGGSITLL), 116–136 (YVELGAGVIAGGSGTAILFGL), 140–160 (LLAAVALASASPLTAALGASM), and 171–191 (ALLMAGVNVGAQFGGGAAAYL).

It localises to the host membrane. The protein resides in the secreted. In terms of biological role, toxin secreted by the H1 type VI (H1-T6SS) secretion system into the periplasm of recipient cells. The chain is Toxin protein Tse4 from Pseudomonas aeruginosa (strain ATCC 15692 / DSM 22644 / CIP 104116 / JCM 14847 / LMG 12228 / 1C / PRS 101 / PAO1).